A 409-amino-acid chain; its full sequence is N-acetylglucosamine-6-phosphate deacetylase (409 aa).

Glu-143 is a binding site for a divalent metal cation. 154–155 (AH) serves as a coordination point for substrate. 2 residues coordinate a divalent metal cation: His-211 and His-232. Substrate contacts are provided by residues 235 to 236 (NA), Arg-243, and 269 to 272 (DGTH). Asp-294 serves as the catalytic Proton donor/acceptor. 328-330 (LSG) serves as a coordination point for substrate.

It belongs to the metallo-dependent hydrolases superfamily. NagA family. A divalent metal cation serves as cofactor.

It catalyses the reaction N-acetyl-D-glucosamine 6-phosphate + H2O = D-glucosamine 6-phosphate + acetate. It functions in the pathway amino-sugar metabolism; N-acetylneuraminate degradation. Functionally, hydrolyzes the N-glycolyl group from N-glycolylglucosamine 6-phosphate (GlcNGc-6-P) in the N-glycolylneuraminic acid (Neu5Gc) degradation pathway. Although human is not able to catalyze formation of Neu5Gc due to the inactive CMAHP enzyme, Neu5Gc is present in food and must be degraded. The sequence is that of N-acetylglucosamine-6-phosphate deacetylase (AMDHD2) from Homo sapiens (Human).